The following is a 611-amino-acid chain: Guanylate-binding protein 6 (611 aa).

A GTPase domain (Globular) region spans residues 1-308; sequence MTQPQMAPIC…NAINSGAVPC (308 aa). A GB1/RHD3-type G domain is found at 33-275; it reads SQPVVVVAIV…FVSYIFTYAK (243 aa). Residues 43 to 50, 65 to 67, and 95 to 99 contribute to the GTP site; these read GLYRTGKS, LGS, and DTEGL.

The protein belongs to the TRAFAC class dynamin-like GTPase superfamily. GB1/RHD3 GTPase family. GB1 subfamily.

It is found in the cytoplasmic vesicle. It catalyses the reaction GTP + H2O = GDP + phosphate + H(+). In terms of biological role, interferon (IFN)-inducible GTPase that plays important roles in innate immunity against a diverse range of bacterial, viral and protozoan pathogens, such as bacterial pathogens Listeria monocytogenes and Mycobacterium bovis BCG as well as the protozoan pathogen Toxoplasma gondii. Confers protection to several pathogens, including the bacterial pathogens Listeria monocytogenes and Mycobacterium bovis BCG as well as the protozoan pathogen Toxoplasma gondii. The sequence is that of Guanylate-binding protein 6 (Gbp6) from Mus musculus (Mouse).